Consider the following 199-residue polypeptide: NAD(P)H-quinone oxidoreductase subunit 6, chloroplastic (199 aa).

Helical transmembrane passes span 13–33 (AILL…VLFT), 35–55 (IVYS…LYIL), 64–84 (VQIL…VMLI), 96–118 (WTVG…IAAI), and 157–177 (LPFE…ITMA).

This sequence belongs to the complex I subunit 6 family. NDH is composed of at least 16 different subunits, 5 of which are encoded in the nucleus.

The protein localises to the plastid. The protein resides in the chloroplast thylakoid membrane. It carries out the reaction a plastoquinone + NADH + (n+1) H(+)(in) = a plastoquinol + NAD(+) + n H(+)(out). It catalyses the reaction a plastoquinone + NADPH + (n+1) H(+)(in) = a plastoquinol + NADP(+) + n H(+)(out). Functionally, NDH shuttles electrons from NAD(P)H:plastoquinone, via FMN and iron-sulfur (Fe-S) centers, to quinones in the photosynthetic chain and possibly in a chloroplast respiratory chain. The immediate electron acceptor for the enzyme in this species is believed to be plastoquinone. Couples the redox reaction to proton translocation, and thus conserves the redox energy in a proton gradient. In Huperzia lucidula (Shining clubmoss), this protein is NAD(P)H-quinone oxidoreductase subunit 6, chloroplastic (ndhG).